The chain runs to 374 residues: 5-aminosalicylate 1,2-dioxygenase (374 aa).

The protein belongs to the gentisate 1,2-dioxygenase family. Requires Fe(2+) as cofactor.

It catalyses the reaction 5-amino-2-hydroxybenzoate + O2 = (2Z,4E)-4-amino-6-oxohepta-2,4-dienedioate + H(+). With respect to regulation, inhibited by SDS and o-phenanthroline, a ferrous iron chelator. Partially inhibited by EDTA. Functionally, involved in the biodegradation of 3-aminobenzoate. Catalyzes the cleavage of the 5-aminosalicylate (5ASA) aromatic ring to form 4-amino-6-oxohepta-2,4-dienedioate (cis-ACOHDA). Can also convert gentisate, but the catalytic efficiency with 5ASA is 70-fold higher. This is 5-aminosalicylate 1,2-dioxygenase from Comamonas sp.